The chain runs to 478 residues: Phosphomannomutase (478 aa).

A helical transmembrane segment spans residues 30–46; sequence FTPEVCARFTISFLTVM. Ser-111 acts as the Phosphoserine intermediate in catalysis. Residues Ser-111, Asp-245, Asp-247, and Asp-249 each coordinate Mg(2+). The chain crosses the membrane as a helical span at residues 265–284; it reads ILGLLCSLELAADAVAIPVS.

This sequence belongs to the phosphohexose mutase family. The cofactor is Mg(2+).

It localises to the cell membrane. It catalyses the reaction alpha-D-mannose 1-phosphate = D-mannose 6-phosphate. It participates in nucleotide-sugar biosynthesis; GDP-alpha-D-mannose biosynthesis; alpha-D-mannose 1-phosphate from D-fructose 6-phosphate: step 2/2. It functions in the pathway bacterial outer membrane biogenesis; LPS O-antigen biosynthesis. In terms of biological role, involved in GDP-mannose biosynthesis which serves as the activated sugar nucleotide precursor for mannose residues in cell surface polysaccharides. This enzyme participates in synthesis of the LPS group C2 O antigen. This is Phosphomannomutase (manB) from Salmonella muenchen.